The primary structure comprises 53 residues: Bowman-Birk type proteinase inhibitor 1 (53 aa).

5 cysteine pairs are disulfide-bonded: Cys-9–Cys-24, Cys-12–Cys-51, Cys-14–Cys-22, Cys-31–Cys-38, and Cys-40–Cys-48.

As to quaternary structure, dimer.

Its function is as follows. Inhibits trypsin (IC(50)=6.20 nM), neutrophil elastase (ELANE) and, to a lesser extent, alpha-chymotrypsin (IC(50)=3.44 uM). The polypeptide is Bowman-Birk type proteinase inhibitor 1 (Lathyrus sativus (White vetchling)).